The following is a 300-amino-acid chain: Ribosomal protein L11 methyltransferase (300 aa).

4 residues coordinate S-adenosyl-L-methionine: Thr-152, Gly-173, Asp-195, and Asn-234.

It belongs to the methyltransferase superfamily. PrmA family.

It is found in the cytoplasm. The catalysed reaction is L-lysyl-[protein] + 3 S-adenosyl-L-methionine = N(6),N(6),N(6)-trimethyl-L-lysyl-[protein] + 3 S-adenosyl-L-homocysteine + 3 H(+). Functionally, methylates ribosomal protein L11. The chain is Ribosomal protein L11 methyltransferase from Burkholderia thailandensis (strain ATCC 700388 / DSM 13276 / CCUG 48851 / CIP 106301 / E264).